Consider the following 520-residue polypeptide: Hydroxymethylglutaryl-CoA synthase, cytoplasmic (520 aa).

Serine 4 carries the post-translational modification Phosphoserine. 2 residues coordinate (3S)-3-hydroxy-3-methylglutaryl-CoA: aspartate 43 and alanine 44. 44-46 (AGK) provides a ligand contact to CoA. Lysine 46 carries the N6-acetyllysine modification. Glutamate 95 serves as the catalytic Proton donor/acceptor. Positions 129, 167, 171, 221, and 264 each coordinate (3S)-3-hydroxy-3-methylglutaryl-CoA. Cysteine 129 (acyl-thioester intermediate) is an active-site residue. CoA is bound at residue asparagine 167. Serine 221 is a binding site for CoA. Histidine 264 (proton donor/acceptor) is an active-site residue. Residues lysine 269 and lysine 273 each coordinate CoA. (3S)-3-hydroxy-3-methylglutaryl-CoA is bound by residues lysine 273, asparagine 343, and serine 377. The residue at position 273 (lysine 273) is an N6-acetyllysine. Residues 487-520 (NTATEHIPSPAKKVPRLPATSGEPESAVISNGEH) are disordered. Serine 495 and serine 516 each carry phosphoserine.

Belongs to the thiolase-like superfamily. HMG-CoA synthase family. In terms of assembly, homodimer.

The protein resides in the cytoplasm. It carries out the reaction acetoacetyl-CoA + acetyl-CoA + H2O = (3S)-3-hydroxy-3-methylglutaryl-CoA + CoA + H(+). Its pathway is metabolic intermediate biosynthesis; (R)-mevalonate biosynthesis; (R)-mevalonate from acetyl-CoA: step 2/3. In terms of biological role, catalyzes the condensation of acetyl-CoA with acetoacetyl-CoA to form HMG-CoA, which is converted by HMG-CoA reductase (HMGCR) into mevalonate, a precursor for cholesterol synthesis. The chain is Hydroxymethylglutaryl-CoA synthase, cytoplasmic from Rattus norvegicus (Rat).